We begin with the raw amino-acid sequence, 764 residues long: Acylamino-acid-releasing enzyme (764 aa).

Catalysis depends on charge relay system residues serine 618, aspartate 707, and histidine 739.

The protein belongs to the peptidase S9C family. As to quaternary structure, homotetramer.

It is found in the cytoplasm. The protein localises to the nucleus. It carries out the reaction Cleavage of an N-acetyl or N-formyl amino acid from the N-terminus of a polypeptide.. With respect to regulation, strongly inhibited by the serine protease inhibitor diisopropyl fluorophosphate. Catalyzes the hydrolysis of the N-terminal peptide bond of an N-acetylated peptide to generate an N-acetylated amino acid and a peptide with a free N-terminus. Can degrade the glycated RuBisCO (ribulose-1,5-bisphosphate carboxylase/oxygenase) protein but not the native protein. May be involved in the elimination of glycated proteins. Plays a homeostatic role in sustaining the cytoplasmic antioxidative system. May contribute to the elimination of the oxidized proteins in the cytoplasm. This chain is Acylamino-acid-releasing enzyme, found in Arabidopsis thaliana (Mouse-ear cress).